We begin with the raw amino-acid sequence, 118 residues long: MNQKSILKIAAAACDDKRAEDILALDMEGISLVADYFLICHGNSDKQVQAIAREIKDQADENGIQVKKMEGFDEARWVLVDLGDVVVHVFHKDERSYYNLEKLWGDAPLADLDFGMNQ.

The protein belongs to the Iojap/RsfS family. Interacts with ribosomal protein uL14 (rplN).

The protein resides in the cytoplasm. Functionally, functions as a ribosomal silencing factor. Interacts with ribosomal protein uL14 (rplN), blocking formation of intersubunit bridge B8. Prevents association of the 30S and 50S ribosomal subunits and the formation of functional ribosomes, thus repressing translation. In Bacillus subtilis (strain 168), this protein is Ribosomal silencing factor RsfS.